Here is a 218-residue protein sequence, read N- to C-terminus: Ribose-5-phosphate isomerase A (218 aa).

Substrate contacts are provided by residues 28 to 31 (TGST), 81 to 84 (DGAD), and 94 to 97 (KGGG). The Proton acceptor role is filled by Glu-103. Lys-121 is a binding site for substrate.

Belongs to the ribose 5-phosphate isomerase family. Homodimer.

It carries out the reaction aldehydo-D-ribose 5-phosphate = D-ribulose 5-phosphate. Its pathway is carbohydrate degradation; pentose phosphate pathway; D-ribose 5-phosphate from D-ribulose 5-phosphate (non-oxidative stage): step 1/1. Its function is as follows. Catalyzes the reversible conversion of ribose-5-phosphate to ribulose 5-phosphate. The sequence is that of Ribose-5-phosphate isomerase A from Shewanella sediminis (strain HAW-EB3).